The following is a 382-amino-acid chain: Lipid-A-disaccharide synthase (382 aa).

It belongs to the LpxB family.

It carries out the reaction a lipid X + a UDP-2-N,3-O-bis[(3R)-3-hydroxyacyl]-alpha-D-glucosamine = a lipid A disaccharide + UDP + H(+). It functions in the pathway bacterial outer membrane biogenesis; LPS lipid A biosynthesis. Condensation of UDP-2,3-diacylglucosamine and 2,3-diacylglucosamine-1-phosphate to form lipid A disaccharide, a precursor of lipid A, a phosphorylated glycolipid that anchors the lipopolysaccharide to the outer membrane of the cell. The chain is Lipid-A-disaccharide synthase from Alkalilimnicola ehrlichii (strain ATCC BAA-1101 / DSM 17681 / MLHE-1).